Reading from the N-terminus, the 156-residue chain is 6,7-dimethyl-8-ribityllumazine synthase (156 aa).

5-amino-6-(D-ribitylamino)uracil contacts are provided by residues phenylalanine 22, alanine 57–glutamate 59, and threonine 81–isoleucine 83. Glycine 86–threonine 87 contacts (2S)-2-hydroxy-3-oxobutyl phosphate. Histidine 89 serves as the catalytic Proton donor. Position 114 (phenylalanine 114) interacts with 5-amino-6-(D-ribitylamino)uracil. Residue arginine 128 coordinates (2S)-2-hydroxy-3-oxobutyl phosphate.

Belongs to the DMRL synthase family. Forms an icosahedral capsid composed of 60 subunits, arranged as a dodecamer of pentamers.

The catalysed reaction is (2S)-2-hydroxy-3-oxobutyl phosphate + 5-amino-6-(D-ribitylamino)uracil = 6,7-dimethyl-8-(1-D-ribityl)lumazine + phosphate + 2 H2O + H(+). The protein operates within cofactor biosynthesis; riboflavin biosynthesis; riboflavin from 2-hydroxy-3-oxobutyl phosphate and 5-amino-6-(D-ribitylamino)uracil: step 1/2. In terms of biological role, catalyzes the formation of 6,7-dimethyl-8-ribityllumazine by condensation of 5-amino-6-(D-ribitylamino)uracil with 3,4-dihydroxy-2-butanone 4-phosphate. This is the penultimate step in the biosynthesis of riboflavin. In Citrobacter koseri (strain ATCC BAA-895 / CDC 4225-83 / SGSC4696), this protein is 6,7-dimethyl-8-ribityllumazine synthase.